Consider the following 378-residue polypeptide: TelA-like protein SAV1406 (378 aa).

The protein belongs to the TelA family.

The protein is TelA-like protein SAV1406 of Staphylococcus aureus (strain Mu50 / ATCC 700699).